A 245-amino-acid polypeptide reads, in one-letter code: Gem-associated protein 2 (245 aa).

The protein belongs to the gemin-2 family. As to quaternary structure, component of the core survival motor neuron (SMN) complex composed of Smn, Gem2, Gem3, rig/Gem5 and one of 3 almost identical Gem4 paralogs encoded by Glos/Gem4a, Gem4b or Gem4c. Part of a minimal SMN complex composed of Smn and Gem2 only; this complex is active in UsnRNP assembly. The SMN complex associates with the entire set of spliceosomal snRNP Sm proteins, SmB, SmD1, SmD2, SmD3, SmE, SmF and SmG, and with the snRNP-specific proteins snRNP-U1-70K, U2A, snf/U1A and U5-116KD. Expressed in nurse cells and oocytes.

The protein localises to the cytoplasm. It localises to the U-body. Its function is as follows. Component of the survival motor neuron (SMN) complex that catalyzes the assembly of small nuclear ribonucleoproteins (snRNPs), the building blocks of the spliceosome, and thereby plays an important role in the splicing of cellular pre-mRNAs. Most spliceosomal snRNPs contain a common set of Sm proteins SNRPB, SNRPD1, SNRPD2, SNRPD3, SNRPE, SNRPF and SNRPG that assemble in a heptameric protein ring on the Sm site of the small nuclear RNA to form the core snRNP (Sm core). In the cytosol, the Sm proteins SNRPD1, SNRPD2, SNRPE, SNRPF and SNRPG (5Sm) are trapped in an inactive 6S pICln-Sm complex by the chaperone CLNS1A that controls the assembly of the core snRNP. To assemble core snRNPs, the SMN complex accepts the trapped 5Sm proteins from CLNS1A. Binding of snRNA inside 5Sm ultimately triggers eviction of the SMN complex, thereby allowing binding of SNRPD3 and SNRPB to complete assembly of the core snRNP. Within the SMN complex, GEMIN2 constrains the conformation of 5Sm, thereby promoting 5Sm binding to snRNA containing the snRNP code (a nonameric Sm site and a 3'-adjacent stem-loop), thus preventing progression of assembly until a cognate substrate is bound. Involved in adult motor function. The protein is Gem-associated protein 2 of Drosophila melanogaster (Fruit fly).